The sequence spans 105 residues: Putative zinc finger protein 861 (105 aa).

The segment at 75–97 (YTCKPCGNAFRFHHSFHIHERPH) adopts a C2H2-type zinc-finger fold.

The chain is Putative zinc finger protein 861 (ZNF861P) from Homo sapiens (Human).